Consider the following 373-residue polypeptide: 1-deoxy-D-xylulose 5-phosphate reductoisomerase (373 aa).

Residues T10, G11, S12, I13, R37, and N112 each contribute to the NADPH site. Residue K113 participates in 1-deoxy-D-xylulose 5-phosphate binding. E114 provides a ligand contact to NADPH. Mn(2+) is bound at residue D134. Residues S135, E136, S160, and H183 each contribute to the 1-deoxy-D-xylulose 5-phosphate site. Residue E136 coordinates Mn(2+). G189 lines the NADPH pocket. Residues S196, N201, K202, and E205 each coordinate 1-deoxy-D-xylulose 5-phosphate. E205 is a binding site for Mn(2+).

Belongs to the DXR family. Requires Mg(2+) as cofactor. Mn(2+) is required as a cofactor.

It catalyses the reaction 2-C-methyl-D-erythritol 4-phosphate + NADP(+) = 1-deoxy-D-xylulose 5-phosphate + NADPH + H(+). It functions in the pathway isoprenoid biosynthesis; isopentenyl diphosphate biosynthesis via DXP pathway; isopentenyl diphosphate from 1-deoxy-D-xylulose 5-phosphate: step 1/6. Its function is as follows. Catalyzes the NADPH-dependent rearrangement and reduction of 1-deoxy-D-xylulose-5-phosphate (DXP) to 2-C-methyl-D-erythritol 4-phosphate (MEP). The protein is 1-deoxy-D-xylulose 5-phosphate reductoisomerase of Persephonella marina (strain DSM 14350 / EX-H1).